The following is a 379-amino-acid chain: Alpha-humulene synthase eupE (379 aa).

The protein belongs to the terpene synthase family. Alpha-humulene synthase eupE subfamily. The cofactor is Mg(2+).

It carries out the reaction (2E,6E)-farnesyl diphosphate = alpha-humulene + diphosphate. The protein operates within secondary metabolite biosynthesis; terpenoid biosynthesis. In terms of biological role, alpha-humulene synthase; part of the gene cluster that mediates the biosynthesis of eupenifeldin, a bistropolone meroterpenoid that acts as an antitumor agent. The first step of eupenifeldin biosynthesis is the biosynthesis of 3-methylorcinaldehyde performed by the non-reducing polyketide synthase eupA. Oxidative dearomatization of 3-methylorcinaldehyde likely catalyzed by the FAD-dependent monooxygenase eupB is followed by oxidative ring expansion by the 2-oxoglutarate-dependent dioxygenase eupC to provide the first tropolone metabolite, tropolone stipitaldehyde. In parallel, generation of sesquiterpene alpha-humulene from farnesylpyrophosphate (FPP) is catalyzed by the terpene cyclase eupE. The cytochrome P450 monooxygenase eupD then hydroxylates humulene to humulenol. The putative Diels-Alderase eupF probably catalyzes the formation of the tropolone-humulene skeleton by linking humulenol and the polyketide moiety. The short-chain dehydrogenase/reductase eupG and the flavin-dependent monooxygenase eupH are also essential for eupenifeldin biosynthesis and are likely the additional decorating enzymes of the tropolone-humulene skeleton to produce final eupenifeldin or derivatives. This chain is Alpha-humulene synthase eupE, found in Phoma sp.